The primary structure comprises 269 residues: Small ribosomal subunit protein uS2 (269 aa).

Residues 228–269 (QLDSDDDYEEFDESLAEGDYDDYDEEEDEDSETVSSQEGEEE) are disordered. A compositionally biased stretch (acidic residues) spans 230-269 (DSDDDYEEFDESLAEGDYDDYDEEEDEDSETVSSQEGEEE).

The protein belongs to the universal ribosomal protein uS2 family.

This chain is Small ribosomal subunit protein uS2, found in Crocosphaera subtropica (strain ATCC 51142 / BH68) (Cyanothece sp. (strain ATCC 51142)).